The sequence spans 256 residues: tRNA pseudouridine synthase A (256 aa).

Catalysis depends on Asp-43, which acts as the Nucleophile. Position 94 (Tyr-94) interacts with substrate.

This sequence belongs to the tRNA pseudouridine synthase TruA family.

It catalyses the reaction uridine(38/39/40) in tRNA = pseudouridine(38/39/40) in tRNA. In terms of biological role, formation of pseudouridine at positions 38, 39 and 40 in the anticodon stem and loop of transfer RNAs. The sequence is that of tRNA pseudouridine synthase A from Pyrobaculum aerophilum (strain ATCC 51768 / DSM 7523 / JCM 9630 / CIP 104966 / NBRC 100827 / IM2).